The primary structure comprises 103 residues: Turripeptide OL55-like (103 aa).

Contains 8 disulfide bonds. Expressed by the venom duct.

Its subcellular location is the secreted. Its function is as follows. Acts as a neurotoxin by inhibiting an ion channel. This is Turripeptide OL55-like from Lophiotoma albina (Sea snail).